The sequence spans 209 residues: Claudin-4 (209 aa).

Residues 1-9 (MASMGLQVT) are Cytoplasmic-facing. The interaction with EPHA2 stretch occupies residues 1-103 (MASMGLQVTG…GVLLSVVGGK (103 aa)). Residues 10 to 30 (GIALAVLGWLAVMLCCALPMW) traverse the membrane as a helical segment. Residues 31 to 81 (RVTAFIGSNIVTSQTIWEGLWMNCVVQSTGQMQCKVYDSLLALPQDLQAAR) are Extracellular-facing. Cysteines 54 and 64 form a disulfide. A helical transmembrane segment spans residues 82 to 102 (ALVIISIIVAALGVLLSVVGG). The Cytoplasmic portion of the chain corresponds to 103–117 (KCTNCLEDESAKAKT). A helical membrane pass occupies residues 118–138 (MIVAGVVFLLAGLLVIVPVSW). Topologically, residues 139–160 (TAHNIIQDFYNPLVASGQKREM) are extracellular. A helical membrane pass occupies residues 161-181 (GASLYVGWAASGLLLLGGGLL). The Cytoplasmic portion of the chain corresponds to 182–209 (CCNCPPRTDKPYSAKYSAARSAAASNYV). At Tyr208 the chain carries Phosphotyrosine; by EPHA2. Positions 208-209 (YV) are interactions with TJP1, TJP2 and TJP3.

This sequence belongs to the claudin family. In terms of assembly, interacts with EPHA2; phosphorylates CLDN4 and may regulate tight junctions. Directly interacts with TJP1/ZO-1, TJP2/ZO-2 and TJP3/ZO-3. Interacts with CLDN1. Interacts with CLDN8. In terms of processing, phosphorylated. Phosphorylation by EPHA2 is stimulated by EFNA1 and alters interaction with TJP1.

Its subcellular location is the cell junction. It localises to the tight junction. It is found in the cell membrane. Channel-forming tight junction protein that mediates paracellular chloride transport in the kidney. Plays a critical role in the paracellular reabsorption of filtered chloride in the kidney collecting ducts. Claudins play a major role in tight junction-specific obliteration of the intercellular space, through calcium-independent cell-adhesion activity. The polypeptide is Claudin-4 (CLDN4) (Chlorocebus aethiops (Green monkey)).